A 420-amino-acid polypeptide reads, in one-letter code: Multiple sugar-binding protein (420 aa).

Positions 1–22 are cleaved as a signal peptide; the sequence is MKWYKKIGLLGIVGLTSVLLAA. The N-palmitoyl cysteine moiety is linked to residue Cys-23. Residue Cys-23 is the site of S-diacylglycerol cysteine attachment.

The protein belongs to the bacterial solute-binding protein 1 family.

The protein localises to the cell membrane. Involved in a binding protein-dependent transport system responsible for the uptake of melibiose, raffinose and isomaltotriose. In Streptococcus mutans serotype c (strain ATCC 700610 / UA159), this protein is Multiple sugar-binding protein.